Reading from the N-terminus, the 75-residue chain is UPF0346 protein LJ_1103 (75 aa).

The protein belongs to the UPF0346 family.

This is UPF0346 protein LJ_1103 from Lactobacillus johnsonii (strain CNCM I-12250 / La1 / NCC 533).